Consider the following 443-residue polypeptide: Tubulin beta-3 chain (443 aa).

Residues Gln-11, Glu-69, Ser-138, Gly-142, Thr-143, Gly-144, Asn-204, and Asn-226 each coordinate GTP. A Mg(2+)-binding site is contributed by Glu-69.

Belongs to the tubulin family. As to quaternary structure, dimer of alpha and beta chains. A typical microtubule is a hollow water-filled tube with an outer diameter of 25 nm and an inner diameter of 15 nM. Alpha-beta heterodimers associate head-to-tail to form protofilaments running lengthwise along the microtubule wall with the beta-tubulin subunit facing the microtubule plus end conferring a structural polarity. Microtubules usually have 13 protofilaments but different protofilament numbers can be found in some organisms and specialized cells. Mg(2+) is required as a cofactor.

The protein localises to the cytoplasm. The protein resides in the cytoskeleton. Its function is as follows. Tubulin is the major constituent of microtubules, a cylinder consisting of laterally associated linear protofilaments composed of alpha- and beta-tubulin heterodimers. Microtubules grow by the addition of GTP-tubulin dimers to the microtubule end, where a stabilizing cap forms. Below the cap, tubulin dimers are in GDP-bound state, owing to GTPase activity of alpha-tubulin. This chain is Tubulin beta-3 chain (TUB-3), found in Echinococcus multilocularis (Fox tapeworm).